The sequence spans 112 residues: UPF0235 protein RHE_CH03912 (112 aa).

The protein belongs to the UPF0235 family.

The protein is UPF0235 protein RHE_CH03912 of Rhizobium etli (strain ATCC 51251 / DSM 11541 / JCM 21823 / NBRC 15573 / CFN 42).